A 149-amino-acid polypeptide reads, in one-letter code: Nucleoside diphosphate kinase (149 aa).

Positions 9, 57, 85, 91, 102, and 112 each coordinate ATP. The active-site Pros-phosphohistidine intermediate is His-115.

It belongs to the NDK family. As to quaternary structure, homotetramer. The cofactor is Mg(2+).

The protein resides in the cytoplasm. It carries out the reaction a 2'-deoxyribonucleoside 5'-diphosphate + ATP = a 2'-deoxyribonucleoside 5'-triphosphate + ADP. The enzyme catalyses a ribonucleoside 5'-diphosphate + ATP = a ribonucleoside 5'-triphosphate + ADP. Functionally, major role in the synthesis of nucleoside triphosphates other than ATP. The ATP gamma phosphate is transferred to the NDP beta phosphate via a ping-pong mechanism, using a phosphorylated active-site intermediate. The polypeptide is Nucleoside diphosphate kinase (Acaryochloris marina (strain MBIC 11017)).